A 240-amino-acid polypeptide reads, in one-letter code: ATP-dependent dethiobiotin synthetase BioD (240 aa).

Residue 15 to 20 (EIGKTF) participates in ATP binding. T19 serves as a coordination point for Mg(2+). K40 is a catalytic residue. ATP is bound by residues D57, 118–121 (EGVG), and 178–179 (NR). The Mg(2+) site is built by D57 and E118.

It belongs to the dethiobiotin synthetase family. Homodimer. Requires Mg(2+) as cofactor.

The protein resides in the cytoplasm. It carries out the reaction (7R,8S)-7,8-diammoniononanoate + CO2 + ATP = (4R,5S)-dethiobiotin + ADP + phosphate + 3 H(+). It participates in cofactor biosynthesis; biotin biosynthesis; biotin from 7,8-diaminononanoate: step 1/2. Functionally, catalyzes a mechanistically unusual reaction, the ATP-dependent insertion of CO2 between the N7 and N8 nitrogen atoms of 7,8-diaminopelargonic acid (DAPA, also called 7,8-diammoniononanoate) to form a ureido ring. The chain is ATP-dependent dethiobiotin synthetase BioD from Burkholderia thailandensis (strain ATCC 700388 / DSM 13276 / CCUG 48851 / CIP 106301 / E264).